The primary structure comprises 223 residues: Thiamine-phosphate synthase (223 aa).

4-amino-2-methyl-5-(diphosphooxymethyl)pyrimidine-binding positions include 37-41 and asparagine 69; that span reads QLREK. The Mg(2+) site is built by aspartate 70 and aspartate 89. Position 108 (serine 108) interacts with 4-amino-2-methyl-5-(diphosphooxymethyl)pyrimidine. 2-[(2R,5Z)-2-carboxy-4-methylthiazol-5(2H)-ylidene]ethyl phosphate is bound at residue 134-136; sequence TGT. Position 137 (lysine 137) interacts with 4-amino-2-methyl-5-(diphosphooxymethyl)pyrimidine. 2-[(2R,5Z)-2-carboxy-4-methylthiazol-5(2H)-ylidene]ethyl phosphate-binding positions include glycine 167 and 187–188; that span reads VS. The segment at 197–223 is disordered; the sequence is AAATRKLQGSVDTASVESQLPSEEPSA. Polar residues predominate over residues 206 to 217; the sequence is SVDTASVESQLP.

Belongs to the thiamine-phosphate synthase family. It depends on Mg(2+) as a cofactor.

The enzyme catalyses 2-[(2R,5Z)-2-carboxy-4-methylthiazol-5(2H)-ylidene]ethyl phosphate + 4-amino-2-methyl-5-(diphosphooxymethyl)pyrimidine + 2 H(+) = thiamine phosphate + CO2 + diphosphate. It catalyses the reaction 2-(2-carboxy-4-methylthiazol-5-yl)ethyl phosphate + 4-amino-2-methyl-5-(diphosphooxymethyl)pyrimidine + 2 H(+) = thiamine phosphate + CO2 + diphosphate. The catalysed reaction is 4-methyl-5-(2-phosphooxyethyl)-thiazole + 4-amino-2-methyl-5-(diphosphooxymethyl)pyrimidine + H(+) = thiamine phosphate + diphosphate. The protein operates within cofactor biosynthesis; thiamine diphosphate biosynthesis; thiamine phosphate from 4-amino-2-methyl-5-diphosphomethylpyrimidine and 4-methyl-5-(2-phosphoethyl)-thiazole: step 1/1. Its function is as follows. Condenses 4-methyl-5-(beta-hydroxyethyl)thiazole monophosphate (THZ-P) and 2-methyl-4-amino-5-hydroxymethyl pyrimidine pyrophosphate (HMP-PP) to form thiamine monophosphate (TMP). The polypeptide is Thiamine-phosphate synthase (Haloquadratum walsbyi (strain DSM 16790 / HBSQ001)).